Here is a 1215-residue protein sequence, read N- to C-terminus: Pesticidal crystal protein Cry1Ka (1215 aa).

It belongs to the delta endotoxin family.

Its function is as follows. Promotes colloidosmotic lysis by binding to the midgut epithelial cells of insects. Selectively toxic to Artogeia rapae but not active on Plutella xylostella. This Bacillus thuringiensis subsp. morrisoni protein is Pesticidal crystal protein Cry1Ka (cry1Ka).